We begin with the raw amino-acid sequence, 265 residues long: Cell division protein DivIB (265 aa).

At methionine 1–leucine 33 the chain is on the cytoplasmic side. A helical membrane pass occupies residues isoleucine 34–phenylalanine 54. One can recognise a POTRA domain in the interval phenylalanine 54–arginine 122. At asparagine 55–lysine 265 the chain is on the extracellular side.

This sequence belongs to the FtsQ/DivIB family. DivIB subfamily.

It localises to the cell membrane. Cell division protein that may be involved in stabilizing or promoting the assembly of the division complex. The polypeptide is Cell division protein DivIB (Clostridium tetani (strain Massachusetts / E88)).